We begin with the raw amino-acid sequence, 367 residues long: tRNA-specific 2-thiouridylase MnmA (367 aa).

ATP contacts are provided by residues 7–14 (AMSGGVDS) and methionine 33. Cysteine 108 serves as the catalytic Nucleophile. Cysteine 108 and cysteine 200 form a disulfide bridge. Glycine 132 serves as a coordination point for ATP. Residues 150-152 (KDQ) form an interaction with tRNA region. Cysteine 200 (cysteine persulfide intermediate) is an active-site residue. The interaction with tRNA stretch occupies residues 301–302 (RY).

This sequence belongs to the MnmA/TRMU family.

Its subcellular location is the cytoplasm. It carries out the reaction S-sulfanyl-L-cysteinyl-[protein] + uridine(34) in tRNA + AH2 + ATP = 2-thiouridine(34) in tRNA + L-cysteinyl-[protein] + A + AMP + diphosphate + H(+). Its function is as follows. Catalyzes the 2-thiolation of uridine at the wobble position (U34) of tRNA, leading to the formation of s(2)U34. This chain is tRNA-specific 2-thiouridylase MnmA, found in Thermus thermophilus (strain ATCC BAA-163 / DSM 7039 / HB27).